A 473-amino-acid polypeptide reads, in one-letter code: Photosystem II CP43 reaction center protein (473 aa).

A propeptide spanning residues 1–14 (MKTLYSLRRFYPVE) is cleaved from the precursor. T15 carries the N-acetylthreonine modification. T15 carries the post-translational modification Phosphothreonine. 5 helical membrane-spanning segments follow: residues 69 to 93 (LFEV…PHLA), 134 to 155 (LLGP…KDRN), 178 to 200 (KALY…RKIT), 255 to 275 (KPFA…LSYS), and 291 to 312 (WFNN…ASQA). E367 contacts [CaMn4O5] cluster. A helical transmembrane segment spans residues 447 to 471 (RARAAAAGFEKGIDRDFEPVLSMTP).

Belongs to the PsbB/PsbC family. PsbC subfamily. In terms of assembly, PSII is composed of 1 copy each of membrane proteins PsbA, PsbB, PsbC, PsbD, PsbE, PsbF, PsbH, PsbI, PsbJ, PsbK, PsbL, PsbM, PsbT, PsbX, PsbY, PsbZ, Psb30/Ycf12, at least 3 peripheral proteins of the oxygen-evolving complex and a large number of cofactors. It forms dimeric complexes. Binds multiple chlorophylls and provides some of the ligands for the Ca-4Mn-5O cluster of the oxygen-evolving complex. It may also provide a ligand for a Cl- that is required for oxygen evolution. PSII binds additional chlorophylls, carotenoids and specific lipids. is required as a cofactor.

Its subcellular location is the plastid. It is found in the chloroplast thylakoid membrane. Functionally, one of the components of the core complex of photosystem II (PSII). It binds chlorophyll and helps catalyze the primary light-induced photochemical processes of PSII. PSII is a light-driven water:plastoquinone oxidoreductase, using light energy to abstract electrons from H(2)O, generating O(2) and a proton gradient subsequently used for ATP formation. The protein is Photosystem II CP43 reaction center protein of Helianthus annuus (Common sunflower).